Here is a 506-residue protein sequence, read N- to C-terminus: Carboxyl-terminal PDZ ligand of neuronal nitric oxide synthase protein (506 aa).

Residues 26–196 form the PID domain; that stretch reads FQHGICFEAK…ESERNSNSSG (171 aa). 2 disordered regions span residues 175 to 224 and 241 to 260; these read HTQQ…VEVP and DAVG…HPQE. Residues serine 188, serine 192, and serine 195 each carry the phosphoserine modification. A compositionally biased stretch (low complexity) spans 203-213; that stretch reads TGAERASTATA. Position 266 is a phosphoserine (serine 266). Residues 322–363 adopt a coiled-coil conformation; it reads AAEAAARLEAQARVHQLLLQNKDMLQHISLLVKQVQELELKL. Residues serine 371, serine 374, serine 401, and serine 417 each carry the phosphoserine modification. Residues 494–506 form an interaction with NOS1 region; sequence QELGDGLDDEIAV. The PDZ-binding signature appears at 504 to 506; that stretch reads IAV.

Interacts with the PDZ domain of NOS1 or the second PDZ domain of DLG4 through its C-terminus. Interacts with RASD1 and SYN1, SYN2 and SYN3 via its PID domain. Forms a ternary complex with NOS1 and RASD1. Forms a ternary complex with NOS1 and SYN1. As to expression, expressed in kidney glomeruli podocytes.

It is found in the cell projection. Its subcellular location is the filopodium. The protein localises to the podosome. Functionally, adapter protein involved in neuronal nitric-oxide (NO) synthesis regulation via its association with nNOS/NOS1. The complex formed with NOS1 and synapsins is necessary for specific NO and synapsin functions at a presynaptic level. Mediates an indirect interaction between NOS1 and RASD1 leading to enhance the ability of NOS1 to activate RASD1. Competes with DLG4 for interaction with NOS1, possibly affecting NOS1 activity by regulating the interaction between NOS1 and DLG4. In kidney podocytes, plays a role in podosomes and filopodia formation through CDC42 activation. The chain is Carboxyl-terminal PDZ ligand of neuronal nitric oxide synthase protein from Homo sapiens (Human).